We begin with the raw amino-acid sequence, 428 residues long: MSEDIFDAIIVGAGLAGSVAALVLAREGAQVLVIERGNSAGAKNVTGGRLYAHSLEHIIPGFAESAPVERLITHEKLAFMTEKSAMTMDYCNGDETSPSQRSYSVLRSKFDAWLMEQAEEAGAQLITGIRVDNLVQRDGKVVGVEADGDVIEAKTVILADGVNSILAEKLGMAKRVKPTNVAVGVKELIELPKSVIEDRFQLQGNQGAACLFAGSPTDGLMGGGFLYTNENTLSLGLVCGLHHLHDAKKSVPQMLEDFKQHPAVAPLIAGGKLVEYSAHVVPEAGINMLPELVGDGVLIAGDAAGMCMNLGFTIRGMDLAIAAGEAAAKTVLSAMKSDDFSKQKLAEYRQHLESGPLRDMRMYQKLPAFLDNPRMFSGYPELAVGVARDLFTIDGSAPELMRKKILRHGKKVGFINLIKDGMKGVTVL.

It belongs to the ETF-QO/FixC family. FAD is required as a cofactor.

Functionally, could be part of an electron transfer system required for anaerobic carnitine reduction. This is Protein FixC (fixC) from Escherichia coli O157:H7.